We begin with the raw amino-acid sequence, 185 residues long: Threonylcarbamoyl-AMP synthase (185 aa).

The 182-residue stretch at 4–185 folds into the YrdC-like domain; the sequence is SFRVQQAARE…LATGEVVRPG (182 aa).

It belongs to the SUA5 family. TsaC subfamily.

The protein resides in the cytoplasm. It catalyses the reaction L-threonine + hydrogencarbonate + ATP = L-threonylcarbamoyladenylate + diphosphate + H2O. In terms of biological role, required for the formation of a threonylcarbamoyl group on adenosine at position 37 (t(6)A37) in tRNAs that read codons beginning with adenine. Catalyzes the conversion of L-threonine, HCO(3)(-)/CO(2) and ATP to give threonylcarbamoyl-AMP (TC-AMP) as the acyladenylate intermediate, with the release of diphosphate. In Pseudomonas putida (strain GB-1), this protein is Threonylcarbamoyl-AMP synthase.